A 244-amino-acid polypeptide reads, in one-letter code: Probable H/ACA ribonucleoprotein complex subunit 1-like protein (244 aa).

Disordered stretches follow at residues 1 to 53 and 145 to 244; these read MSFR…GGYD and FLPQ…TKFE. RGG-box stretches follow at residues 4 to 51 and 153 to 222; these read RGGR…GRGG and RGRG…RGRG. The span at 160-173 shows a compositional bias: basic and acidic residues; the sequence is RGGDRGGRGSDRGG. 2 stretches are compositionally biased toward gly residues: residues 174–201 and 208–217; these read RGGF…GGFR and FRGGRGGDFG. The segment covering 218-228 has biased composition (basic and acidic residues); the sequence is GRGRGDFKRSY.

This sequence belongs to the GAR1 family. In terms of assembly, component of the small nucleolar ribonucleoprotein particle containing H/ACA-type snoRNAs (H/ACA snoRNPs).

It localises to the nucleus. The protein resides in the nucleolus. Required for ribosome biogenesis. Part of a complex which catalyzes pseudouridylation of rRNA. This involves the isomerization of uridine such that the ribose is subsequently attached to C5, instead of the normal N1. Pseudouridine ('psi') residues may serve to stabilize the conformation of rRNAs. Involved in phase separation into sub-nucleolar condensates. Essential for normal development and also plays a role in fertility. The chain is Probable H/ACA ribonucleoprotein complex subunit 1-like protein from Caenorhabditis elegans.